Reading from the N-terminus, the 464-residue chain is Fumarate hydratase class II (464 aa).

Residues 96–98, 127–130, 137–139, and threonine 185 contribute to the substrate site; these read SGT, HPND, and SSN. Histidine 186 functions as the Proton donor/acceptor in the catalytic mechanism. The active site involves serine 316. Substrate contacts are provided by residues serine 317 and 322-324; that span reads KVN.

This sequence belongs to the class-II fumarase/aspartase family. Fumarase subfamily. In terms of assembly, homotetramer.

The protein localises to the cytoplasm. The enzyme catalyses (S)-malate = fumarate + H2O. It participates in carbohydrate metabolism; tricarboxylic acid cycle; (S)-malate from fumarate: step 1/1. In terms of biological role, involved in the TCA cycle. Catalyzes the stereospecific interconversion of fumarate to L-malate. This chain is Fumarate hydratase class II, found in Pseudomonas putida (strain ATCC 47054 / DSM 6125 / CFBP 8728 / NCIMB 11950 / KT2440).